A 741-amino-acid chain; its full sequence is NAD(P)H-quinone oxidoreductase subunit 5, chloroplastic (741 aa).

Helical transmembrane passes span tryptophan 9–phenylalanine 29, tryptophan 40–isoleucine 60, isoleucine 89–isoleucine 109, phenylalanine 125–isoleucine 145, valine 147–threonine 167, glycine 185–phenylalanine 205, valine 221–serine 241, threonine 258–alanine 278, leucine 280–isoleucine 300, leucine 327–isoleucine 347, alanine 354–serine 374, threonine 396–serine 416, leucine 425–tyrosine 445, isoleucine 547–proline 567, phenylalanine 602–cysteine 622, and isoleucine 720–tyrosine 740.

The protein belongs to the complex I subunit 5 family. NDH is composed of at least 16 different subunits, 5 of which are encoded in the nucleus.

The protein resides in the plastid. The protein localises to the chloroplast thylakoid membrane. The catalysed reaction is a plastoquinone + NADH + (n+1) H(+)(in) = a plastoquinol + NAD(+) + n H(+)(out). It catalyses the reaction a plastoquinone + NADPH + (n+1) H(+)(in) = a plastoquinol + NADP(+) + n H(+)(out). Functionally, NDH shuttles electrons from NAD(P)H:plastoquinone, via FMN and iron-sulfur (Fe-S) centers, to quinones in the photosynthetic chain and possibly in a chloroplast respiratory chain. The immediate electron acceptor for the enzyme in this species is believed to be plastoquinone. Couples the redox reaction to proton translocation, and thus conserves the redox energy in a proton gradient. This is NAD(P)H-quinone oxidoreductase subunit 5, chloroplastic (ndhF) from Arabis hirsuta (Hairy rock-cress).